The chain runs to 342 residues: tRNA dimethylallyltransferase (342 aa).

ATP is bound at residue 39–46 (GPTGSGKT). 41–46 (TGSGKT) contributes to the substrate binding site. The interval 64 to 67 (DSMQ) is interaction with substrate tRNA.

This sequence belongs to the IPP transferase family. Monomer. Mg(2+) serves as cofactor.

The catalysed reaction is adenosine(37) in tRNA + dimethylallyl diphosphate = N(6)-dimethylallyladenosine(37) in tRNA + diphosphate. Catalyzes the transfer of a dimethylallyl group onto the adenine at position 37 in tRNAs that read codons beginning with uridine, leading to the formation of N6-(dimethylallyl)adenosine (i(6)A). This chain is tRNA dimethylallyltransferase, found in Chlamydia caviae (strain ATCC VR-813 / DSM 19441 / 03DC25 / GPIC) (Chlamydophila caviae).